A 100-amino-acid chain; its full sequence is Aspartyl/glutamyl-tRNA(Asn/Gln) amidotransferase subunit C (100 aa).

Belongs to the GatC family. Heterotrimer of A, B and C subunits.

It catalyses the reaction L-glutamyl-tRNA(Gln) + L-glutamine + ATP + H2O = L-glutaminyl-tRNA(Gln) + L-glutamate + ADP + phosphate + H(+). The catalysed reaction is L-aspartyl-tRNA(Asn) + L-glutamine + ATP + H2O = L-asparaginyl-tRNA(Asn) + L-glutamate + ADP + phosphate + 2 H(+). In terms of biological role, allows the formation of correctly charged Asn-tRNA(Asn) or Gln-tRNA(Gln) through the transamidation of misacylated Asp-tRNA(Asn) or Glu-tRNA(Gln) in organisms which lack either or both of asparaginyl-tRNA or glutaminyl-tRNA synthetases. The reaction takes place in the presence of glutamine and ATP through an activated phospho-Asp-tRNA(Asn) or phospho-Glu-tRNA(Gln). The sequence is that of Aspartyl/glutamyl-tRNA(Asn/Gln) amidotransferase subunit C from Streptococcus pyogenes serotype M18 (strain MGAS8232).